A 418-amino-acid polypeptide reads, in one-letter code: Serine hydroxymethyltransferase (418 aa).

Residues leucine 121 and 125 to 127 (GHL) contribute to the (6S)-5,6,7,8-tetrahydrofolate site. Lysine 230 is modified (N6-(pyridoxal phosphate)lysine). (6S)-5,6,7,8-tetrahydrofolate contacts are provided by residues glutamate 246 and 355–357 (SPF).

The protein belongs to the SHMT family. In terms of assembly, homodimer. The cofactor is pyridoxal 5'-phosphate.

It is found in the cytoplasm. The enzyme catalyses (6R)-5,10-methylene-5,6,7,8-tetrahydrofolate + glycine + H2O = (6S)-5,6,7,8-tetrahydrofolate + L-serine. It functions in the pathway one-carbon metabolism; tetrahydrofolate interconversion. Its pathway is amino-acid biosynthesis; glycine biosynthesis; glycine from L-serine: step 1/1. Catalyzes the reversible interconversion of serine and glycine with tetrahydrofolate (THF) serving as the one-carbon carrier. This reaction serves as the major source of one-carbon groups required for the biosynthesis of purines, thymidylate, methionine, and other important biomolecules. Also exhibits THF-independent aldolase activity toward beta-hydroxyamino acids, producing glycine and aldehydes, via a retro-aldol mechanism. The chain is Serine hydroxymethyltransferase from Streptococcus pneumoniae (strain 70585).